Reading from the N-terminus, the 252-residue chain is Small ribosomal subunit protein uS2 (252 aa).

It belongs to the universal ribosomal protein uS2 family.

This chain is Small ribosomal subunit protein uS2, found in Alcanivorax borkumensis (strain ATCC 700651 / DSM 11573 / NCIMB 13689 / SK2).